A 142-amino-acid polypeptide reads, in one-letter code: Gonadotropin subunit beta-2 (142 aa).

Positions 1 to 23 (MLGLHVGTLISLFLCILLEPIEG) are cleaved as a signal peptide. Cystine bridges form between C29-C77, C43-C92, C46-C130, C54-C108, C58-C110, and C113-C120. N-linked (GlcNAc...) asparagine glycosylation occurs at N33.

Belongs to the glycoprotein hormones subunit beta family. Heterodimer of an alpha and a beta chain.

It is found in the secreted. In terms of biological role, involved in gametogenesis and steroidogenesis. This chain is Gonadotropin subunit beta-2 (cgbb), found in Oncorhynchus tshawytscha (Chinook salmon).